We begin with the raw amino-acid sequence, 126 residues long: Large ribosomal subunit protein bL12 (126 aa).

This sequence belongs to the bacterial ribosomal protein bL12 family. As to quaternary structure, homodimer. Part of the ribosomal stalk of the 50S ribosomal subunit. Forms a multimeric L10(L12)X complex, where L10 forms an elongated spine to which 2 to 4 L12 dimers bind in a sequential fashion. Binds GTP-bound translation factors.

Its function is as follows. Forms part of the ribosomal stalk which helps the ribosome interact with GTP-bound translation factors. Is thus essential for accurate translation. The sequence is that of Large ribosomal subunit protein bL12 from Koribacter versatilis (strain Ellin345).